A 300-amino-acid polypeptide reads, in one-letter code: MAKLSLFRGCIVPNRYPGIEKATKLCLQKLEVDAVDLPGASCCPAPGVFKSFDKATWLALASRNIVLSERMGRDILTVCNGCYGSLADANIELKNDPEMKACTNSCLKEIGMEYKGTAEVRHIIEFLYKELGPEKLKSFITTPLDLKVALHYGCHLIKPSKERNLGETEAPVFFDELVEATGAKSVDYTDKMMCCGAGGGVRSGHAAESLEMLEHKLACIRNAGVDCIVNACPFCHLQFDRGQLAVNEKFGTDYSIPVLHYSQLLGLALGFSPDELGIEQNAIQNIEFLAKIYEISAGLR.

Belongs to the HdrB family. In terms of assembly, the ferredoxin/F(420)H(2)-dependent CoB-CoM heterodisulfide reductase is composed of three subunits; HdrA2, HdrB2 and HdrC2. The cofactor is [4Fe-4S] cluster.

It is found in the cytoplasm. The catalysed reaction is coenzyme B + coenzyme M + 2 oxidized [2Fe-2S]-[ferredoxin] = coenzyme M-coenzyme B heterodisulfide + 2 reduced [2Fe-2S]-[ferredoxin] + 2 H(+). It carries out the reaction coenzyme B + 2 oxidized coenzyme F420-(gamma-L-Glu)(n) + coenzyme M + 2 reduced [2Fe-2S]-[ferredoxin] + 4 H(+) = coenzyme M-coenzyme B heterodisulfide + 2 reduced coenzyme F420-(gamma-L-Glu)(n) + 2 oxidized [2Fe-2S]-[ferredoxin]. Its pathway is cofactor metabolism; coenzyme M-coenzyme B heterodisulfide reduction; coenzyme B and coenzyme M from coenzyme M-coenzyme B heterodisulfide: step 1/1. Its function is as follows. Part of a complex that catalyzes the reversible reduction of CoM-S-S-CoB to the thiol-coenzymes H-S-CoM (coenzyme M) and H-S-CoB (coenzyme B). Catalyzes the transfer of electrons from ferredoxin to CoM-S-S-CoB during methanogenesis from acetate. Electrons transfer from ferredoxin to CoM-S-S-CoB via HdrA2, HdrC2 and HdrB2. In addition, the complex can use electron bifurcation to direct electron pairs from reduced coenzyme F420 towards the reduction of both ferredoxin and CoB-CoM heterodisulfide. This activity may take place during Fe(III)-dependent anaerobic methane oxidation. This Methanosarcina acetivorans (strain ATCC 35395 / DSM 2834 / JCM 12185 / C2A) protein is Ferredoxin/F(420)H(2)-dependent CoB-CoM heterodisulfide reductase subunit B.